A 273-amino-acid polypeptide reads, in one-letter code: MPELPEVEVTRRGVAPHLEGQVITGVALRHTGLRWPFPATLSQTLAGRTVRSTGRRGKYLLIHFDHGTLIIHLGMSGHLRILPSDVPPKKHDHFDLEIGPQLLRLTDPRRFGAVLWHAAEDGSIENHLLLRTLGVEPLEAAFSAQWLYQQTRNRSSAIKQVLLAGDIVVGVGNIYASESLFQARINPKTPAHRIGLARYERLAEAIRQILAAAIEQGGSTLKDFIGVNGQSGYFQQNYFCYARTGEPCRICKTPIRQIVQGQRSTFYCPNCQK.

The active-site Schiff-base intermediate with DNA is the P2. E3 acts as the Proton donor in catalysis. The active-site Proton donor; for beta-elimination activity is the K58. DNA contacts are provided by H91, R109, and R154. Residues 239-273 (FCYARTGEPCRICKTPIRQIVQGQRSTFYCPNCQK) form an FPG-type zinc finger. R263 (proton donor; for delta-elimination activity) is an active-site residue.

The protein belongs to the FPG family. As to quaternary structure, monomer. Zn(2+) is required as a cofactor.

It carries out the reaction Hydrolysis of DNA containing ring-opened 7-methylguanine residues, releasing 2,6-diamino-4-hydroxy-5-(N-methyl)formamidopyrimidine.. The enzyme catalyses 2'-deoxyribonucleotide-(2'-deoxyribose 5'-phosphate)-2'-deoxyribonucleotide-DNA = a 3'-end 2'-deoxyribonucleotide-(2,3-dehydro-2,3-deoxyribose 5'-phosphate)-DNA + a 5'-end 5'-phospho-2'-deoxyribonucleoside-DNA + H(+). Its function is as follows. Involved in base excision repair of DNA damaged by oxidation or by mutagenic agents. Acts as a DNA glycosylase that recognizes and removes damaged bases. Has a preference for oxidized purines, such as 7,8-dihydro-8-oxoguanine (8-oxoG). Has AP (apurinic/apyrimidinic) lyase activity and introduces nicks in the DNA strand. Cleaves the DNA backbone by beta-delta elimination to generate a single-strand break at the site of the removed base with both 3'- and 5'-phosphates. This chain is Formamidopyrimidine-DNA glycosylase, found in Janthinobacterium sp. (strain Marseille) (Minibacterium massiliensis).